A 363-amino-acid polypeptide reads, in one-letter code: Dihydroorotate dehydrogenase (quinone) (363 aa).

FMN contacts are provided by residues 67–71 (AGYDK) and T91. Position 71 (K71) interacts with substrate. Residue 116 to 120 (NRMGF) participates in substrate binding. The FMN site is built by N145 and N178. Residue N178 participates in substrate binding. The active-site Nucleophile is S181. A substrate-binding site is contributed by N183. Residues K224 and T254 each contribute to the FMN site. 255–256 (NT) contributes to the substrate binding site. Residues G275, G304, and 325-326 (YS) each bind FMN.

It belongs to the dihydroorotate dehydrogenase family. Type 2 subfamily. As to quaternary structure, monomer. FMN is required as a cofactor.

It is found in the cell membrane. It catalyses the reaction (S)-dihydroorotate + a quinone = orotate + a quinol. It participates in pyrimidine metabolism; UMP biosynthesis via de novo pathway; orotate from (S)-dihydroorotate (quinone route): step 1/1. In terms of biological role, catalyzes the conversion of dihydroorotate to orotate with quinone as electron acceptor. In Acidithiobacillus ferrooxidans (strain ATCC 23270 / DSM 14882 / CIP 104768 / NCIMB 8455) (Ferrobacillus ferrooxidans (strain ATCC 23270)), this protein is Dihydroorotate dehydrogenase (quinone).